The chain runs to 150 residues: Small ribosomal subunit protein eS19 (150 aa).

The protein belongs to the eukaryotic ribosomal protein eS19 family. Part of the 30S ribosomal subunit.

Functionally, may be involved in maturation of the 30S ribosomal subunit. The protein is Small ribosomal subunit protein eS19 of Thermococcus kodakarensis (strain ATCC BAA-918 / JCM 12380 / KOD1) (Pyrococcus kodakaraensis (strain KOD1)).